The primary structure comprises 2255 residues: MEPSDTERCDVGILFGPQSSDMDEALSCIRSYVLEQPAVRYLVDLVLELPSLWPEIKNAWPALSQVPGEEQLVALGRFFNGGPFPASDEAMNVITTPVTVIRHIVEFYKVKETMKGFQARDVQGFCVGFLAATAVAASCDETAFRALVSKIIRLAVCIGGLVDLDELAVHRARSMAVRWDGEEDYDRLEQVLAAHPEAYIACVTDANRATLTVPKSLAPQMIQDLANHGLSVREIRLCGRFHHPDHTAAVEQMSRLCERDCRFQLPDASSLSLPLRSNINGEVIRTGQLHTIALQSILCFRSQWLITVTAALASITMTDESIRLVSIGPHQCVPRMAQSKLIRTVTSSPVDGCYEAINGTGAAPVRPIAVTGMACRYPQANSVEELWEMLELGKCAVKPLPNDRLKMVELLREPKGPYWGHYLEEPDMFDHRFFGISAREAATMDPQQRLLLQVAYEAMESAGYCGLRSSQIPRDVGCYVGVGSDDYTDNVGSHHANAYSAPGTLQAFNTGRISHYFGWSGPSVVVDTACSSAAVAIHLACQALRTKDCSVAIAGGVNVMTSPKVTQNLAAASFLSPTGASKAFDADADGYCRGEGAGLVVLRPLEDAISDVDPILAVITGTAVNQGSNCSPITVPVSESQMSLYGKSLAASGIAPEDVTYVEAHGTGTQVGDPIEFDSIRRMFGGRHRSEELYVGSIKDNIGHTETSSGVAGLVKTILMMQKGRIPKQANFSRLNPKIPAPEGDRIVIPKQSTDWKSARRVAMVTNYGAAGSNAAIVLRQHTITTNTGSSWLSDVPVFVAAKSPESLRSYCYKMQAFLRQTAGLLGCTMRDITYNLAIKQNRDLDFLVSFPTPSQDPMTLLSQLESVAAGVTDLQQRPAQAPSVILCFGGQNGNTAHISQDLFAGCHLLQAHLADCEKICQSMGLPSLFPTIFQEEPIHDLVNLHCILFAIQYASAMCWIHSGLQVKRMLGHSFGQLTALCVAGGLTLIDAIRLVSERARLIETSWAGDHGVMLSVDASEAEVRALVNRAGDTVDLACYNGARSYVLAGDEISIQVVEKLADGMRIKRLPNTHAFHSRLVDSIVPGLRKLAQSLKYHPTTIPVEACSEDGSAWTCVTPDQIVAHSRMPVHFDSAVQRAANHVQGPVVWLEAGSASPIVSMVRRVVEESSSSRAHLYQASDLKSPQAQANLAKATSGLWANGIPTSHWTEYDPLAFLPASAPIAEASSEPMGLVQVLEKRPSECLFSVNTKDPLYRTCTQGHAVVEQNLCPASLYLEMVVSAAGCLSSAGLITAMPHLQELSISAPLVLEPDGDVLLRLSQSPAEKTAWTFSLFTQAGQKAPVSHATGRISLHPFDSTSTILSRFRSLDRLMNPSRPDSIASLPSSSGLKGSAVYQAFRRVVNYADYYRGVESVFCVSTEATGRVFVPLSLSRESACDPILIDNFVQVAGVHVNCLADVPEDEVYVCSAVGEAFIGEVFMKRDPAAPQPWRVYSNYDRLSKGQVACDVFVMDQKSGQLAIAILAATFTSVSIRALTRTLAKLNNHQPSMLATNEPSAGHKEVNSILNVVDRPPPTAATVDTNKFPAIQAMLSDLLGVGLDELSPYSSLMAIGVDSLMSTEVLTEIKKRFGVNITSAELGEIPDIQCLVQAIFPGASVAQKQATTSKMPPLSDLAESVFNGPAPPDALMLAQKAYDLFGTTQANTDYSQITKWAGFCESVFPKQMALVTAYVVEAFRALGYPLELLHAGQAVPLIPVLPQHESVRNQLYEVLKFSKLICRKDDGMFRTAEAVPSDTSLLLHEDIIKEYPHHASEHTLLRTTGSRLAECLSGSADPLALLFQNADARRVMEDVYTNAPMFKSATMHLAQYLQDLVILLRSRRDIKILEIGAGTGGTTKYLVSQLAAVPGLRFEYTFTDISTSLVTLAKKKFNGYSCIQYATLNIEQDPPDDLLGQYDIVLSTNCIHATRNIAHSCDNIRKLLRPDGILCLIELTRNLFWFDLVFGLLEGWWLFNDGRNHALATEQFWNESLRQAGYNWVNWSCNDSRESEILRLIVASPTLPHGASQILFRSPLVTEETVKYDEKDGVQLLADIYYPSEVDDAHRRRPIALLIHGGGHVMLSRKDIRSQQIKMLLNSGFLPVSIDYRLCPETSLTEGPMRDVRDALVWTRRTLPRLSLKRPDIRPNGDQVVAVGWSTGGHLAMTLSWTASLCGVRAPEAILSFYCPTDYSDPFWSQPNFPYGRDIAPQMKCTIFGMQ.

Residues 13–251 (ILFGPQSSDM…HHPDHTAAVE (239 aa)) form an N-terminal acylcarrier protein transacylase domain (SAT) region. The 417-residue stretch at 365-781 (VRPIAVTGMA…GSNAAIVLRQ (417 aa)) folds into the Ketosynthase family 3 (KS3) domain. Catalysis depends on for beta-ketoacyl synthase activity residues Cys-530, His-665, and His-704. The interval 887–1187 (LCFGGQNGNT…QASDLKSPQA (301 aa)) is malonyl-CoA:ACP transacylase (MAT) domain. The active-site For acyl/malonyl transferase activity is Ser-974. Positions 1229-1357 (EPMGLVQVLE…GRISLHPFDS (129 aa)) are N-terminal hotdog fold. The PKS/mFAS DH domain maps to 1229–1536 (EPMGLVQVLE…FTSVSIRALT (308 aa)). Positions 1232–1535 (GLVQVLEKRP…TFTSVSIRAL (304 aa)) are product template (PT) domain. His-1262 acts as the Proton acceptor; for dehydratase activity in catalysis. The segment at 1385–1536 (SSSGLKGSAV…FTSVSIRALT (152 aa)) is C-terminal hotdog fold. Residue Asp-1443 is the Proton donor; for dehydratase activity of the active site. The region spanning 1581–1655 (TNKFPAIQAM…CLVQAIFPGA (75 aa)) is the Carrier domain. The residue at position 1615 (Ser-1615) is an O-(pantetheine 4'-phosphoryl)serine. The interval 1809-2042 (HHASEHTLLR…GYNWVNWSCN (234 aa)) is methyltransferase (CMeT) domain. Residues 2109–2227 (LLIHGGGHVM…ILSFYCPTDY (119 aa)) form a thioesterase (TE) domain region. The For thioesterase activity role is filled by Ser-2194.

The enzyme catalyses 3 malonyl-CoA + acetyl-CoA + 2 S-adenosyl-L-methionine = 3,5-dimethylorsellinate + 2 S-adenosyl-L-homocysteine + 3 CO2 + 4 CoA. It functions in the pathway secondary metabolite biosynthesis; terpenoid biosynthesis. Its function is as follows. Non-reducing polyketide synthase; part of the gene cluster that mediates the biosynthesis of novofumigatonin, a heavily oxygenated meroterpenoid containing a unique orthoester moiety. The first step of the pathway is the synthesis of 3,5-dimethylorsellinic acid (DMOA) by the polyketide synthase nvfA via condensation of one acetyl-CoA starter unit with 3 malonyl-CoA units and 2 methylations. DMOA is then converted to farnesyl-DMOA by the farnesyltransferase nvfB. Epoxydation by FAD-dependent monooxygenase nvfK, followed by a protonation-initiated cyclization catalyzed by the terpene cyclase nvfL leads to the production of asnavolin H. The short chain dehydrogenase nvfC then as a 3-OH dehydrogenase of asnovolin H to yield chemesin D. There are two branches to synthesize asnovolin A from chemesin D. In one branch, chemesin D undergoes Baeyer-Villiger oxidation by nvfH, methylation by nvfJ, and enoyl reduction by the nvfM D enoylreductase that reduces the double bond between C-5'and C-6', to form respectively asnovolin I, asnovolin K, and asnovolin A. In the other branch, the methylation precedes the Baeyer-Villiger oxidation and the enoyl reduction to yield asnovolin A via the asnovolin J intermediate. Asnovolin A is further converted to fumigatonoid A by the Fe(II)/2-oxoglutarate-dependent dioxygenase nvfI that catalyzes an endoperoxidation reaction. The alpha/beta hydrolase nvfD then acts as an epimerase that converts fumigatonoid A to its C-5' epimer, which then undergoes spontaneous or nvfD-catalyzed lactonization. The following step utilizes the ketoreductase nvfG to produce fumigatonoid B. The dioxygenase nvfE further converts fumigatonoid B into fumigatonoid C. Finally the Fe(II)/2-oxoglutarate-dependent dioxygenase nvfF catalyzes two rounds of oxidation to transform fumigatonoid C into the end product, novofumigatonin A. The polypeptide is Non-reducing polyketide synthase nvfA (Aspergillus novofumigatus (strain IBT 16806)).